The sequence spans 388 residues: Succinate--CoA ligase [ADP-forming] subunit beta (388 aa).

The ATP-grasp domain occupies 9-244 (KALFAEYGLP…PSQDDAREAH (236 aa)). ATP is bound by residues lysine 46, 53-55 (GRG), glutamate 99, threonine 102, and glutamate 107. Mg(2+) contacts are provided by asparagine 199 and aspartate 213. Residues asparagine 264 and 321–323 (GIV) each bind substrate.

It belongs to the succinate/malate CoA ligase beta subunit family. As to quaternary structure, heterotetramer of two alpha and two beta subunits. Requires Mg(2+) as cofactor.

It carries out the reaction succinate + ATP + CoA = succinyl-CoA + ADP + phosphate. The catalysed reaction is GTP + succinate + CoA = succinyl-CoA + GDP + phosphate. The protein operates within carbohydrate metabolism; tricarboxylic acid cycle; succinate from succinyl-CoA (ligase route): step 1/1. Its function is as follows. Succinyl-CoA synthetase functions in the citric acid cycle (TCA), coupling the hydrolysis of succinyl-CoA to the synthesis of either ATP or GTP and thus represents the only step of substrate-level phosphorylation in the TCA. The beta subunit provides nucleotide specificity of the enzyme and binds the substrate succinate, while the binding sites for coenzyme A and phosphate are found in the alpha subunit. In Shewanella pealeana (strain ATCC 700345 / ANG-SQ1), this protein is Succinate--CoA ligase [ADP-forming] subunit beta.